Here is a 489-residue protein sequence, read N- to C-terminus: Nuclear distribution protein PAC1 (489 aa).

Residues 66–98 are a coiled coil; it reads STVLRLQKKIIDLENEISNLNNIINSSNSDNNG. WD repeat units follow at residues 119 to 158, 164 to 205, 206 to 246, 249 to 291, 328 to 368, 389 to 428, and 437 to 486; these read QCENIVTTVKLHPNLPLVLNGCNDGNLYIWNISNDDNTIP, AHTR…RTLN, GHEH…SLKS, GHSE…GLAM, IPLE…IAPH, GHSSWVKCLCVHPNGRFIISGSDDKTIKFWDLSSLLETGS, and GHDG…NSIK.

It belongs to the WD repeat LIS1/nudF family. Self-associates. Interacts with NDL1 and dynein.

The protein resides in the cytoplasm. The protein localises to the cytoskeleton. It is found in the spindle pole. Positively regulates the activity of the minus-end directed microtubule motor protein dynein. Plays a central role in positioning the mitotic spindle at the bud neck during cell division. Targets cytoplasmic dynein to microtubule plus ends, thereby promoting dynein-mediated microtubule sliding along the bud cortex and consequently the movement of the mitotic spindle to the bud neck. In Candida dubliniensis (strain CD36 / ATCC MYA-646 / CBS 7987 / NCPF 3949 / NRRL Y-17841) (Yeast), this protein is Nuclear distribution protein PAC1.